Reading from the N-terminus, the 243-residue chain is Putative glycerophosphodiester phosphodiesterase YhdW (243 aa).

One can recognise a GP-PDE domain in the interval M1–G238. H6 functions as the Proton acceptor in the catalytic mechanism. 2 residues coordinate Ca(2+): E33 and D35. The Proton donor role is filled by H48. E107 serves as a coordination point for Ca(2+).

This sequence belongs to the glycerophosphoryl diester phosphodiesterase family. It depends on Ca(2+) as a cofactor.

The enzyme catalyses a sn-glycero-3-phosphodiester + H2O = an alcohol + sn-glycerol 3-phosphate + H(+). Glycerophosphodiester phosphodiesterase hydrolyzes glycerophosphodiesters into glycerol-3-phosphate (G3P) and the corresponding alcohol. In Bacillus subtilis (strain 168), this protein is Putative glycerophosphodiester phosphodiesterase YhdW (yhdW).